The chain runs to 465 residues: MGSKTPNDHRRGPNVESSPHAAIDTINPPKHAAASGLLHGPLEGETEDGEDEDDDKTGADLKSVGQLNNSTKKKNKRKKNKKKKKTLLGGLQTTPPRVALSSIFYDQRYPEAEIVGYTTNNDNLQRITAEEFRHLCVVNDMDDEFLNDYRKAAEVHRQVRQYVQTITKPGIAMSQLAQEIEDGVRALTDHQGIETGDALKAGMAFPTGLCLNNIGAHWTPNPGAKEVILQYDDVLKVDFGVHVNGRIVDSAYTMAFNPVYDDLLTAVKAATNTGLKEAGIDARIDCISEAIQEVMESYEVELNRKIIPVKAVRNITGHNILRYKIHGDKQVPFVKTHTNQRMEEGDIFAIETFGSTGKAYLDDDIGIYGYFCDEHASAAGLHHSSAKSLLKTIKDNFGTLVFSRRYLERLGVKSYHLGMRSLVSKGIVQSYAPLVDVPGSYVAQFEHTVLLRPNCKEVISRGDDY.

Over residues 1 to 13 (MGSKTPNDHRRGP) the composition is skewed to basic and acidic residues. Residues 1 to 92 (MGSKTPNDHR…KKKTLLGGLQ (92 aa)) are disordered. Over residues 44–55 (GETEDGEDEDDD) the composition is skewed to acidic residues. A compositionally biased stretch (basic residues) spans 71 to 86 (TKKKNKRKKNKKKKKT). His217 contributes to the substrate binding site. Residues Asp238, Asp249, and His318 each contribute to the a divalent metal cation site. His326 contacts substrate. A divalent metal cation is bound by residues Glu351 and Glu446.

This sequence belongs to the peptidase M24A family. Methionine aminopeptidase eukaryotic type 2 subfamily. The cofactor is Co(2+). Requires Zn(2+) as cofactor. Mn(2+) serves as cofactor. It depends on Fe(2+) as a cofactor.

It localises to the cytoplasm. The enzyme catalyses Release of N-terminal amino acids, preferentially methionine, from peptides and arylamides.. Functionally, cotranslationally removes the N-terminal methionine from nascent proteins. The N-terminal methionine is often cleaved when the second residue in the primary sequence is small and uncharged (Met-Ala-, Cys, Gly, Pro, Ser, Thr, or Val). The protein is Methionine aminopeptidase 2-2 of Ajellomyces dermatitidis (strain ER-3 / ATCC MYA-2586) (Blastomyces dermatitidis).